We begin with the raw amino-acid sequence, 422 residues long: p-hydroxyphenylacetate 3-hydroxylase, oxygenase component (422 aa).

Residue W112 participates in FMN binding. 2 residues coordinate substrate: H120 and S146. FMN is bound by residues 146 to 148 (SSI) and 169 to 171 (WSS). Residue 263-266 (RPYF) participates in substrate binding. FMN contacts are provided by residues R292, Y296, 374-375 (AT), and 396-397 (HA). Y296 contacts substrate.

The protein belongs to the HpaH/HsaA monooxygenase family. In terms of assembly, homotetramer. The p-hydroxyphenylacetate 3-hydroxylase (HpaH) is composed of an oxygenase component C2 and a reductase component C1.

It catalyses the reaction 4-hydroxyphenylacetate + FMNH2 + O2 = 3,4-dihydroxyphenylacetate + FMN + H2O + H(+). The catalysed reaction is 4-hydroxyphenylacetate + FADH2 + O2 = 3,4-dihydroxyphenylacetate + FAD + H2O + H(+). It functions in the pathway aromatic compound metabolism; 4-hydroxyphenylacetate degradation; pyruvate and succinate semialdehyde from 4-hydroxyphenylacetate: step 1/7. Inhibited by flavin concentrations greater than 15 uM. Also inhibited by excess p-hydroxyphenylacetate (HPA). Its function is as follows. Oxygenase component of a two-component system that utilizes reduced FMN (FMNH2) supplied by the reductase component to catalyze the hydroxylation of 4-hydroxyphenylacetic acid, leading to the production of 3,4-dihydroxyphenylacetate (3,4-DHPA). Also utilizes other reduced flavins such as FADH2 and reduced riboflavin to a lesser extent. Only the compounds with a hydroxyl group in the para (p-) position can be hydroxylated. May also oxidize phenol to catechol, and hydroxylate other phenol derivatives. This Acinetobacter baumannii protein is p-hydroxyphenylacetate 3-hydroxylase, oxygenase component.